The chain runs to 340 residues: Sulfotransferase ppzF (340 aa).

It functions in the pathway secondary metabolite biosynthesis. Sulfotransferase; part of the gene cluster that mediates the biosynthesis of pyrrolopyrazines, secondary metabolites showing insecticidal activity. The role of ppzF within the pathway has still to be determined. The single multifunctional NRPS ppzA is sufficient to produce peramine via condensation of 1-pyrroline-5-carboxylate and arginine, N-methylation of the alpha-amino group of arginine and reduction of the thioester and the cyclization to form an iminium ion resulting in release from the peptide synthetase. Deprotonation of this intermediate and oxidation of the pyrroline ring would give rise to peramine. In Epichloe species that produce only peramine, the peramine synthetase gene is not localized in a gene cluster, in contrast to Metarhizium species that contain additional pyrrolopyrazine biosynthesis genes. The 2-oxoglutarate-Fe(II) type oxidoreductase ppzC hydroxylates peramine to yield the newly identified compound 8-hydroxyperamine whereas ppzD converts L-proline into trans-4-hydroxy-L-proline, a precursor of peramine biosynthesis. This is Sulfotransferase ppzF from Metarhizium majus (strain ARSEF 297).